We begin with the raw amino-acid sequence, 98 residues long: MSKPDRYVSFVGIDGDSNARKLVALLRRHIDDPARTNRFWELFKDKLEKINKPDETSGFSQDELYLVHAYINNIRELFETYDDQPALALLDRIEAESC.

This sequence belongs to the CowN family.

In terms of biological role, is required to sustain N(2)-dependent growth in the presence of low levels of carbon monoxide (CO). Probably acts by protecting the N(2) fixation ability of the nitrogenase complex, which is inactivated in the presence of CO. The sequence is that of N(2)-fixation sustaining protein CowN from Trichlorobacter lovleyi (strain ATCC BAA-1151 / DSM 17278 / SZ) (Geobacter lovleyi).